The sequence spans 395 residues: LL-diaminopimelate aminotransferase (395 aa).

Positions 14 and 41 each coordinate substrate. Residues Tyr71, 104-105 (AK), Tyr128, Asn174, Tyr205, and 233-235 (SFS) each bind pyridoxal 5'-phosphate. Substrate contacts are provided by Lys105, Tyr128, and Asn174. At Lys236 the chain carries N6-(pyridoxal phosphate)lysine. 2 residues coordinate pyridoxal 5'-phosphate: Arg244 and Asn275. Residues Asn275 and Arg368 each coordinate substrate.

The protein belongs to the class-I pyridoxal-phosphate-dependent aminotransferase family. LL-diaminopimelate aminotransferase subfamily. In terms of assembly, homodimer. The cofactor is pyridoxal 5'-phosphate.

The catalysed reaction is (2S,6S)-2,6-diaminopimelate + 2-oxoglutarate = (S)-2,3,4,5-tetrahydrodipicolinate + L-glutamate + H2O + H(+). Its pathway is amino-acid biosynthesis; L-lysine biosynthesis via DAP pathway; LL-2,6-diaminopimelate from (S)-tetrahydrodipicolinate (aminotransferase route): step 1/1. Involved in the synthesis of meso-diaminopimelate (m-DAP or DL-DAP), required for both lysine and peptidoglycan biosynthesis. Catalyzes the direct conversion of tetrahydrodipicolinate to LL-diaminopimelate. The polypeptide is LL-diaminopimelate aminotransferase (Chlamydia caviae (strain ATCC VR-813 / DSM 19441 / 03DC25 / GPIC) (Chlamydophila caviae)).